Consider the following 261-residue polypeptide: Large ribosomal subunit protein uL2 (261 aa).

The segment at 207-233 (VEHPHGGGNHQHIGKASTVKRGTPPGR) is disordered.

Belongs to the universal ribosomal protein uL2 family.

Its subcellular location is the cytoplasm. This chain is Large ribosomal subunit protein uL2 (RpL8), found in Aedes albopictus (Asian tiger mosquito).